The sequence spans 510 residues: NAD(P)H-quinone oxidoreductase subunit 2 B, chloroplastic (510 aa).

13 consecutive transmembrane segments (helical) span residues 24 to 44, 57 to 77, 99 to 119, 124 to 144, 149 to 169, 183 to 203, 227 to 247, 295 to 315, 323 to 343, 354 to 374, 395 to 415, 428 to 448, and 484 to 504; these read LLLFDGSLIFPECILIFGLIL, LPWFYFISSTSLVMSITALLF, IFQFLILLCSTLCIPLSVEYI, MAITEFLLFVLTATLGGMFLC, LITIFVAPECFSFCSYLLSGY, YLLMGGASSSILVHAFSWLYG, PGISIALLFITVGIGFKLSPA, WHLLLEILAILSMILGNIIAI, MLAYSSIGQIGYVIIGIIVGD, YMLFYISMNLGTFACIVLFGL, ALSLALCLLSLGGLPPLAGFF, GLYSLVLIGLLTSVVSIYYYL, and MIVCVIASTIPGISMNPIIAI.

The protein belongs to the complex I subunit 2 family. NDH is composed of at least 16 different subunits, 5 of which are encoded in the nucleus.

The protein resides in the plastid. Its subcellular location is the chloroplast thylakoid membrane. It catalyses the reaction a plastoquinone + NADH + (n+1) H(+)(in) = a plastoquinol + NAD(+) + n H(+)(out). The catalysed reaction is a plastoquinone + NADPH + (n+1) H(+)(in) = a plastoquinol + NADP(+) + n H(+)(out). Its function is as follows. NDH shuttles electrons from NAD(P)H:plastoquinone, via FMN and iron-sulfur (Fe-S) centers, to quinones in the photosynthetic chain and possibly in a chloroplast respiratory chain. The immediate electron acceptor for the enzyme in this species is believed to be plastoquinone. Couples the redox reaction to proton translocation, and thus conserves the redox energy in a proton gradient. The sequence is that of NAD(P)H-quinone oxidoreductase subunit 2 B, chloroplastic from Jasminum nudiflorum (Winter jasmine).